Here is a 1322-residue protein sequence, read N- to C-terminus: Ice nucleation protein InaA (1322 aa).

The octapeptide periodicity stretch occupies residues 162 to 1281 (ATYGSTLSGT…LTAGENSVLI (1120 aa)). 4 stretches are compositionally biased toward polar residues: residues 271-302 (SLTA…QKGS), 327-350 (TQTA…QKGS), 373-398 (GSTQ…QKGS), and 423-446 (TQTA…QKGS). Disordered regions lie at residues 271–303 (SLTA…KGSD), 327–358 (TQTA…GYGS), 372–399 (YGST…KGSD), and 423–448 (TQTA…GSDL).

It belongs to the bacterial ice nucleation protein family.

The protein resides in the cell outer membrane. Ice nucleation proteins enable bacteria to nucleate crystallization in supercooled water. This chain is Ice nucleation protein InaA (inaA), found in Pantoea ananas (Erwinia uredovora).